Reading from the N-terminus, the 284-residue chain is 2-dehydro-3-deoxyphosphooctonate aldolase (284 aa).

This sequence belongs to the KdsA family.

It localises to the cytoplasm. It catalyses the reaction D-arabinose 5-phosphate + phosphoenolpyruvate + H2O = 3-deoxy-alpha-D-manno-2-octulosonate-8-phosphate + phosphate. It participates in carbohydrate biosynthesis; 3-deoxy-D-manno-octulosonate biosynthesis; 3-deoxy-D-manno-octulosonate from D-ribulose 5-phosphate: step 2/3. Its pathway is bacterial outer membrane biogenesis; lipopolysaccharide biosynthesis. The polypeptide is 2-dehydro-3-deoxyphosphooctonate aldolase (Yersinia enterocolitica serotype O:8 / biotype 1B (strain NCTC 13174 / 8081)).